A 169-amino-acid polypeptide reads, in one-letter code: Secreted RxLR effector protein BLN03 (169 aa).

The first 21 residues, 1–21, serve as a signal peptide directing secretion; sequence MRPRKYIVVVLLSIAYTMCLA. The short motif at 51–54 is the dEER element; the sequence is TEER. A helical transmembrane segment spans residues 149–169; that stretch reads GSAFLFVIGFIVLLAFAMTAV.

Belongs to the RxLR effector family. As to quaternary structure, interacts with host transcription factor NAC069.

Its subcellular location is the secreted. It is found in the host membrane. Functionally, secreted effector that inhibits stress-induced relocalization of the endoplasmic reticulum tail-anchored transcription factors to the nucleus, thus affecting stress responses. This is Secreted RxLR effector protein BLN03 from Bremia lactucae (Lettuce downy mildew).